A 358-amino-acid chain; its full sequence is uncharacterized protein (358 aa).

Belongs to the serpin family. Poxviruses subfamily.

This is an uncharacterized protein from Fowlpox virus (strain NVSL) (FPV).